Here is a 370-residue protein sequence, read N- to C-terminus: DNA primase small subunit PriS (370 aa).

Residues Asp-92, Asp-94, and Asp-272 contribute to the active site.

The protein belongs to the eukaryotic-type primase small subunit family. Heterodimer of a small subunit (PriS) and a large subunit (PriL). Mg(2+) is required as a cofactor. Mn(2+) serves as cofactor.

In terms of biological role, catalytic subunit of DNA primase, an RNA polymerase that catalyzes the synthesis of short RNA molecules used as primers for DNA polymerase during DNA replication. The small subunit contains the primase catalytic core and has DNA synthesis activity on its own. Binding to the large subunit stabilizes and modulates the activity, increasing the rate of DNA synthesis while decreasing the length of the DNA fragments, and conferring RNA synthesis capability. The DNA polymerase activity may enable DNA primase to also catalyze primer extension after primer synthesis. May also play a role in DNA repair. This Picrophilus torridus (strain ATCC 700027 / DSM 9790 / JCM 10055 / NBRC 100828 / KAW 2/3) protein is DNA primase small subunit PriS.